A 332-amino-acid chain; its full sequence is Malate dehydrogenase (332 aa).

An NAD(+)-binding site is contributed by 15–21 (GAAGHIG). Positions 96 and 102 each coordinate substrate. NAD(+)-binding positions include asparagine 109 and 133-135 (VGN). Substrate contacts are provided by asparagine 135 and arginine 166. Histidine 191 acts as the Proton acceptor in catalysis.

This sequence belongs to the LDH/MDH superfamily. MDH type 2 family.

The enzyme catalyses (S)-malate + NAD(+) = oxaloacetate + NADH + H(+). Its function is as follows. Catalyzes the reversible oxidation of malate to oxaloacetate. The sequence is that of Malate dehydrogenase from Mycolicibacterium vanbaalenii (strain DSM 7251 / JCM 13017 / BCRC 16820 / KCTC 9966 / NRRL B-24157 / PYR-1) (Mycobacterium vanbaalenii).